Here is a 227-residue protein sequence, read N- to C-terminus: E3 ubiquitin-protein ligase ZNRF1 (227 aa).

Residues 1-42 (MGGKQSTAARSRGPFPGVSTDDSAVPPPGGAPHFGHYRTGGG) form a disordered region. A lipid anchor (N-myristoyl glycine) is attached at glycine 2. A required for endosomal and lysosomal localization and myristoylation region spans residues 2–10 (GGKQSTAAR). 3 positions are modified to phosphoserine: serine 50, serine 52, and serine 53. The disordered stretch occupies residues 68–105 (PFGLYTPASRGTGDSERAPGGGGSASDSTYAHGNGYQE). Tyrosine 103 is modified (phosphotyrosine; by SRC). Position 123 is a phosphoserine (serine 123). The segment at 184 to 225 (CVICLEELLQGDTIARLPCLCIYHKSCIDSWFEVNRSCPEHP) adopts an RING-type; atypical zinc-finger fold.

Interacts with AKT1, GLUL and TUBB2A. Interacts with ZNRF2. Interacts (via its RING domain) with UBE2N. Interacts (when phosphorylated) with YWHAE. N-myristoylation targets ZNRF1 to intracellular membranes. In terms of processing, phosphorylated by SRC at Tyr-103; leading to 'Lys-63'-linked ubiquitination of TLR3, lysosomal trafficking and degradation. As to expression, expressed primarily in the nervous system, with expression higher in developing brain relative to adult. Expressed at low levels in testis and thymus.

Its subcellular location is the endosome. The protein resides in the lysosome. It localises to the membrane. The protein localises to the cytoplasmic vesicle. It is found in the secretory vesicle. Its subcellular location is the synaptic vesicle membrane. The catalysed reaction is S-ubiquitinyl-[E2 ubiquitin-conjugating enzyme]-L-cysteine + [acceptor protein]-L-lysine = [E2 ubiquitin-conjugating enzyme]-L-cysteine + N(6)-ubiquitinyl-[acceptor protein]-L-lysine.. It functions in the pathway protein modification; protein ubiquitination. Its function is as follows. E3 ubiquitin-protein ligase that plays a role in different processes including cell differentiation, receptor recycling or regulation of inflammation. Mediates the ubiquitination of AKT1 and GLUL, thereby playing a role in neuron cells differentiation. Plays a role in the establishment and maintenance of neuronal transmission and plasticity. Regulates Schwann cells differentiation by mediating ubiquitination of GLUL. Promotes neurodegeneration by mediating 'Lys-48'-linked polyubiquitination and subsequent degradation of AKT1 in axons: degradation of AKT1 prevents AKT1-mediated phosphorylation of GSK3B, leading to GSK3B activation and phosphorylation of DPYSL2/CRMP2 followed by destabilization of microtubule assembly in axons. Ubiquitinates the Na(+)/K(+) ATPase alpha-1 subunit/ATP1A1 and thereby influences its endocytosis and/or degradation. Controls ligand-induced EGFR signaling via mediating receptor ubiquitination and recruitment of the ESCRT machinery. Acts as a negative feedback mechanism controlling TLR3 trafficking by mediating TLR3 'Lys-63'-linked polyubiquitination to reduce type I IFN production. Modulates inflammation by promoting caveolin-1/CAV1 ubiquitination and degradation to regulate TLR4-activated immune response. The chain is E3 ubiquitin-protein ligase ZNRF1 (ZNRF1) from Homo sapiens (Human).